Here is a 242-residue protein sequence, read N- to C-terminus: Placenta-expressed transcript 1 protein (242 aa).

A signal peptide spans 1–26; that stretch reads MAVLRSLLPQLGLFLCLALCFSPALS. N-linked (GlcNAc...) asparagine glycosylation is found at Asn47, Asn56, and Asn66. A lipid anchor (GPI-anchor amidated serine) is attached at Ser223. Positions 224 to 242 are cleaved as a propeptide — removed in mature form; sequence PLAGALHILLVFLISKLLF.

N-glycosylated. In terms of processing, GPI-anchored. Present at high level in the dermal sheath cells near the bulge area of the hair follicle and in the differentiated sebocytes of the normal adult skin (at protein level).

The protein localises to the apical cell membrane. Modulates leading keratinocyte migration and cellular adhesion to matrix proteins during a wound-healing response and promotes wound repair. May play a role during trichilemmal differentiation of the hair follicle. The chain is Placenta-expressed transcript 1 protein (PLET1) from Mesocricetus auratus (Golden hamster).